Here is a 447-residue protein sequence, read N- to C-terminus: N-succinylarginine dihydrolase (447 aa).

Substrate is bound by residues 19–28 (AGLSFGNEAS), Asn-110, and 137–138 (HR). Residue Glu-174 is part of the active site. Residue Arg-212 participates in substrate binding. His-248 is a catalytic residue. Asp-250 and Asn-359 together coordinate substrate. Residue Cys-365 is the Nucleophile of the active site.

The protein belongs to the succinylarginine dihydrolase family. Homodimer.

The enzyme catalyses N(2)-succinyl-L-arginine + 2 H2O + 2 H(+) = N(2)-succinyl-L-ornithine + 2 NH4(+) + CO2. Its pathway is amino-acid degradation; L-arginine degradation via AST pathway; L-glutamate and succinate from L-arginine: step 2/5. In terms of biological role, catalyzes the hydrolysis of N(2)-succinylarginine into N(2)-succinylornithine, ammonia and CO(2). The polypeptide is N-succinylarginine dihydrolase (Salmonella arizonae (strain ATCC BAA-731 / CDC346-86 / RSK2980)).